The following is a 605-amino-acid chain: Elongation factor 4 (605 aa).

A tr-type G domain is found at 9–192; it reads GMIRNFCIIA…AIVQRIPAPA (184 aa). GTP contacts are provided by residues 21 to 26 and 139 to 142; these read DHGKST and NKID.

Belongs to the TRAFAC class translation factor GTPase superfamily. Classic translation factor GTPase family. LepA subfamily.

It localises to the cell inner membrane. The catalysed reaction is GTP + H2O = GDP + phosphate + H(+). Required for accurate and efficient protein synthesis under certain stress conditions. May act as a fidelity factor of the translation reaction, by catalyzing a one-codon backward translocation of tRNAs on improperly translocated ribosomes. Back-translocation proceeds from a post-translocation (POST) complex to a pre-translocation (PRE) complex, thus giving elongation factor G a second chance to translocate the tRNAs correctly. Binds to ribosomes in a GTP-dependent manner. The chain is Elongation factor 4 from Chlorobaculum parvum (strain DSM 263 / NCIMB 8327) (Chlorobium vibrioforme subsp. thiosulfatophilum).